The chain runs to 260 residues: Ubiquinone/menaquinone biosynthesis C-methyltransferase UbiE (260 aa).

Residues Thr83, Asp104, and Asn132–Ala133 contribute to the S-adenosyl-L-methionine site.

It belongs to the class I-like SAM-binding methyltransferase superfamily. MenG/UbiE family.

The catalysed reaction is a 2-demethylmenaquinol + S-adenosyl-L-methionine = a menaquinol + S-adenosyl-L-homocysteine + H(+). It carries out the reaction a 2-methoxy-6-(all-trans-polyprenyl)benzene-1,4-diol + S-adenosyl-L-methionine = a 5-methoxy-2-methyl-3-(all-trans-polyprenyl)benzene-1,4-diol + S-adenosyl-L-homocysteine + H(+). The protein operates within quinol/quinone metabolism; menaquinone biosynthesis; menaquinol from 1,4-dihydroxy-2-naphthoate: step 2/2. It functions in the pathway cofactor biosynthesis; ubiquinone biosynthesis. Methyltransferase required for the conversion of demethylmenaquinol (DMKH2) to menaquinol (MKH2) and the conversion of 2-polyprenyl-6-methoxy-1,4-benzoquinol (DDMQH2) to 2-polyprenyl-3-methyl-6-methoxy-1,4-benzoquinol (DMQH2). The sequence is that of Ubiquinone/menaquinone biosynthesis C-methyltransferase UbiE from Bartonella quintana (strain Toulouse) (Rochalimaea quintana).